The following is a 252-amino-acid chain: Pyrroloquinoline-quinone synthase (252 aa).

Belongs to the PqqC family.

It catalyses the reaction 6-(2-amino-2-carboxyethyl)-7,8-dioxo-1,2,3,4,7,8-hexahydroquinoline-2,4-dicarboxylate + 3 O2 = pyrroloquinoline quinone + 2 H2O2 + 2 H2O + H(+). The protein operates within cofactor biosynthesis; pyrroloquinoline quinone biosynthesis. In terms of biological role, ring cyclization and eight-electron oxidation of 3a-(2-amino-2-carboxyethyl)-4,5-dioxo-4,5,6,7,8,9-hexahydroquinoline-7,9-dicarboxylic-acid to PQQ. The protein is Pyrroloquinoline-quinone synthase of Acinetobacter baumannii (strain ACICU).